The following is a 377-amino-acid chain: Nitric oxide reductase FlRd-NAD(+) reductase (377 aa).

The protein belongs to the FAD-dependent oxidoreductase family. The cofactor is FAD.

The protein resides in the cytoplasm. The catalysed reaction is 2 reduced [nitric oxide reductase rubredoxin domain] + NAD(+) + H(+) = 2 oxidized [nitric oxide reductase rubredoxin domain] + NADH. It participates in nitrogen metabolism; nitric oxide reduction. Its function is as follows. One of at least two accessory proteins for anaerobic nitric oxide (NO) reductase. Reduces the rubredoxin moiety of NO reductase. This chain is Nitric oxide reductase FlRd-NAD(+) reductase, found in Salmonella heidelberg (strain SL476).